Here is a 247-residue protein sequence, read N- to C-terminus: uncharacterized protein (247 aa).

This is an uncharacterized protein from Acidianus bottle-shaped virus (isolate Italy/Pozzuoli) (ABV).